Here is a 549-residue protein sequence, read N- to C-terminus: Chaperonin GroEL 5 (549 aa).

ATP contacts are provided by residues 30 to 33 (TLGP), lysine 51, 87 to 91 (DGTTT), glycine 415, and aspartate 495.

Belongs to the chaperonin (HSP60) family. In terms of assembly, forms a cylinder of 14 subunits composed of two heptameric rings stacked back-to-back. Interacts with the co-chaperonin GroES.

The protein localises to the cytoplasm. It catalyses the reaction ATP + H2O + a folded polypeptide = ADP + phosphate + an unfolded polypeptide.. In terms of biological role, together with its co-chaperonin GroES, plays an essential role in assisting protein folding. The GroEL-GroES system forms a nano-cage that allows encapsulation of the non-native substrate proteins and provides a physical environment optimized to promote and accelerate protein folding. The sequence is that of Chaperonin GroEL 5 from Mesorhizobium japonicum (strain LMG 29417 / CECT 9101 / MAFF 303099) (Mesorhizobium loti (strain MAFF 303099)).